A 339-amino-acid polypeptide reads, in one-letter code: MKVEAITKEETKKPERKIKLAIAKPEDYSNKNVILEKEEELICPVCGSKNIIKDYERAEIVCEMCGCVLQQNLFDVGPEWRAFDHEQRVKRSRVGAPMTYTIHDKGLSTVIDWRNKDSYGKDISADKRAQLYRLRKWQRRIRVSDASERNLAFALSELDRIASKLGLPRNVRENAAVLYRGAVEKGLIRGRSIEGVAAAALYAACRRCKVPRTLDEIAEVSRVDRKEIGRTYRFISRELNIRLAPTNPVDYVPRFASELKLPGEVESKAISILQKAGEKGLTSGRGPTGVAAAAIYIASVLQGTRRTQREVADVAGVTEVTIRNRYKELTEHLDIDVTL.

The TFIIB-type zinc finger occupies 39–70 (EELICPVCGSKNIIKDYERAEIVCEMCGCVLQ). Cys43, Cys46, Cys62, and Cys65 together coordinate Zn(2+). 2 repeat units span residues 156 to 239 (SELD…SREL) and 250 to 331 (DYVP…ELTE).

The protein belongs to the TFIIB family.

Stabilizes TBP binding to an archaeal box-A promoter. Also responsible for recruiting RNA polymerase II to the pre-initiation complex (DNA-TBP-TFIIB). In Methanococcus maripaludis (strain C6 / ATCC BAA-1332), this protein is Transcription initiation factor IIB.